A 187-amino-acid polypeptide reads, in one-letter code: Ribosome-recycling factor (187 aa).

It belongs to the RRF family.

Its subcellular location is the cytoplasm. In terms of biological role, responsible for the release of ribosomes from messenger RNA at the termination of protein biosynthesis. May increase the efficiency of translation by recycling ribosomes from one round of translation to another. The chain is Ribosome-recycling factor from Mycoplasmopsis pulmonis (strain UAB CTIP) (Mycoplasma pulmonis).